The sequence spans 247 residues: Probable transcriptional regulatory protein Tola_2714 (247 aa).

A disordered region spans residues 1 to 21 (MAGHSKWANIKHRKAAQDAKR).

This sequence belongs to the TACO1 family.

The protein localises to the cytoplasm. This is Probable transcriptional regulatory protein Tola_2714 from Tolumonas auensis (strain DSM 9187 / NBRC 110442 / TA 4).